Reading from the N-terminus, the 178-residue chain is Probable chorismate pyruvate-lyase (178 aa).

Arginine 72, leucine 110, and glutamate 169 together coordinate substrate.

It belongs to the UbiC family.

Its subcellular location is the cytoplasm. The enzyme catalyses chorismate = 4-hydroxybenzoate + pyruvate. It participates in cofactor biosynthesis; ubiquinone biosynthesis. Removes the pyruvyl group from chorismate, with concomitant aromatization of the ring, to provide 4-hydroxybenzoate (4HB) for the ubiquinone pathway. In Nitrosomonas europaea (strain ATCC 19718 / CIP 103999 / KCTC 2705 / NBRC 14298), this protein is Probable chorismate pyruvate-lyase.